We begin with the raw amino-acid sequence, 53 residues long: Chlorophyll a-b binding protein 1, chloroplastic (53 aa).

Phe-18 lines the chlorophyll b pocket. Residues Glu-48 and His-51 each coordinate chlorophyll a. Arg-53 contributes to the chlorophyll b binding site.

Belongs to the light-harvesting chlorophyll a/b-binding (LHC) protein family. As to quaternary structure, the LHC complex consists of chlorophyll a-b binding proteins. Requires Binds at least 14 chlorophylls (8 Chl-a and 6 Chl-b) and carotenoids such as lutein and neoxanthin. as cofactor. Photoregulated by reversible phosphorylation of its threonine residues.

The protein localises to the plastid. Its subcellular location is the chloroplast thylakoid membrane. In terms of biological role, the light-harvesting complex (LHC) functions as a light receptor, it captures and delivers excitation energy to photosystems with which it is closely associated. The protein is Chlorophyll a-b binding protein 1, chloroplastic of Populus euphratica (Euphrates poplar).